The following is a 74-amino-acid chain: CLAVATA3/ESR (CLE)-related protein 1 (74 aa).

The first 22 residues, 1-22, serve as a signal peptide directing secretion; the sequence is MANLKFLLCLFLICVSLSRSSA. Asn59 carries an N-linked (GlcNAc...) asparagine glycan. A hydroxyproline mark is found at Pro66 and Pro69. Pro69 carries an O-linked (Ara...) hydroxyproline glycan.

This sequence belongs to the CLV3/ESR signal peptide family. In terms of processing, the O-glycosylation (arabinosylation) of the hydroxyproline Pro-69 enhances binding affinity of the CLE1p peptide for its receptor. As to expression, mostly expressed in roots and seedlings, and, to a lower extent, in stems and apex.

The protein localises to the secreted. It is found in the extracellular space. Its function is as follows. Extracellular signal peptide that regulates cell fate. This chain is CLAVATA3/ESR (CLE)-related protein 1, found in Arabidopsis thaliana (Mouse-ear cress).